The chain runs to 129 residues: Glycine cleavage system H protein (129 aa).

One can recognise a Lipoyl-binding domain in the interval 23 to 105 (SAVVGITEHA…YGEGWLAKFS (83 aa)). Lys-64 bears the N6-lipoyllysine mark.

The protein belongs to the GcvH family. The glycine cleavage system is composed of four proteins: P, T, L and H. (R)-lipoate is required as a cofactor.

Its function is as follows. The glycine cleavage system catalyzes the degradation of glycine. The H protein shuttles the methylamine group of glycine from the P protein to the T protein. The chain is Glycine cleavage system H protein from Herpetosiphon aurantiacus (strain ATCC 23779 / DSM 785 / 114-95).